The sequence spans 155 residues: MSRKGSTPQRTVLPDPKHGSETIARFINMVMQSGKKSVAEKIVYGAMDVIGEKNPNAIELVQKALDNVAPAVEVKSRRVGGATYQVPVEVRSSRRMALAMRWLIDSARKRGENTMPRKLAAELLDAAESRGGAIKKREETHRMAEANKAFAHYRW.

Belongs to the universal ribosomal protein uS7 family. In terms of assembly, part of the 30S ribosomal subunit. Contacts proteins S9 and S11.

One of the primary rRNA binding proteins, it binds directly to 16S rRNA where it nucleates assembly of the head domain of the 30S subunit. Is located at the subunit interface close to the decoding center, probably blocks exit of the E-site tRNA. The polypeptide is Small ribosomal subunit protein uS7 (Xanthomonas oryzae pv. oryzae (strain MAFF 311018)).